The primary structure comprises 287 residues: Flagellin (287 aa).

This sequence belongs to the bacterial flagellin family.

The protein localises to the secreted. It localises to the bacterial flagellum. Flagellin is the subunit protein which polymerizes to form the filaments of bacterial flagella. This Listeria innocua serovar 6a (strain ATCC BAA-680 / CLIP 11262) protein is Flagellin (flaA).